We begin with the raw amino-acid sequence, 201 residues long: Peroxiredoxin prdx-2 (201 aa).

The 159-residue stretch at 10–168 (AFIGKPAPQF…TLRLVQAFQF (159 aa)) folds into the Thioredoxin domain. Residue C55 is the Cysteine sulfenic acid (-SOH) intermediate of the active site.

It belongs to the peroxiredoxin family. AhpC/Prx1 subfamily. Monomer and homodimer; disulfide-linked. Under nonstress conditions, present in the reduced monomeric form. Forms active hyperoxidized monomers and disulfide-linked homodimers upon oxidation by hydrogen peroxide. Forms active oxidized homodimers in response to the drug metformin. In terms of processing, the enzyme can be inactivated by further oxidation of the cysteine sulfenic acid (C(P)-SOH) to sulphinic acid (C(P)-SO2H) instead of its condensation to a disulfide bond. In terms of tissue distribution, expressed in the gonad, neurons and intestine (at protein level). Expressed in the pharyngeal inter-neuron I4 and the sensory interneuron I2. Expressed in the intestine, pharyngeal muscle 1, vulval muscle, body wall muscle, epithelial cells e1 and e3, and neurons in the head and tail.

It is found in the cytoplasm. It carries out the reaction a hydroperoxide + [thioredoxin]-dithiol = an alcohol + [thioredoxin]-disulfide + H2O. Its activity is regulated as follows. Activated following oxidation of the conserved redox-active cysteine residue, which subsequently allows for the oxidation and activation of substrates. In terms of biological role, thiol-specific peroxidase that catalyzes the reduction of hydrogen peroxide and organic hydroperoxides to water and alcohols, respectively. In I2 pharyngeal neurons, required for the inhibition of feeding in response to light and hydrogen peroxide. In the intestine, plays a role in protecting cells against oxidative stress by detoxifying peroxides such as hydrogen peroxide. In addition, plays a role in the recovery from oxidative stress induced by hydrogen peroxide. In its hyperoxidized form (induced by hydrogen peroxide), confers protection against heat stress. However, has a low tendency for overoxidation during the normal lifespan. Increases sensitivity to cytotoxicity caused by metalloids and heavy metals such as arsenic and cadmium by playing a role in inhibiting the expression of phase II detoxification genes such as gcs-1 in intestinal cells. In addition, in response to arsenite, promotes the secretion of the insulin ligand daf-28 into the pseudocoelom, which negatively regulates the activities of daf-16 and skn-1. Plays a role in promoting longevity. Plays a role in the mitohormetic pathway by promoting the activation of pmk-1 in response to the drug metformin. This is Peroxiredoxin prdx-2 from Caenorhabditis elegans.